An 808-amino-acid chain; its full sequence is Putative dimethyl sulfoxide reductase chain YnfE (808 aa).

Positions M1–A43 form a signal peptide, tat-type signal. The 62-residue stretch at E49 to D110 folds into the 4Fe-4S Mo/W bis-MGD-type domain. C56, C60, C64, and C96 together coordinate [4Fe-4S] cluster. S196 contributes to the Mo-bis(molybdopterin guanine dinucleotide) binding site.

It belongs to the prokaryotic molybdopterin-containing oxidoreductase family. [4Fe-4S] cluster is required as a cofactor. Mo-bis(molybdopterin guanine dinucleotide) serves as cofactor. Post-translationally, exported by the Tat system. The position of the signal peptide cleavage has not been experimentally proven.

The protein resides in the cell membrane. In terms of biological role, terminal reductase during anaerobic growth on various sulfoxide and N-oxide compounds. This chain is Putative dimethyl sulfoxide reductase chain YnfE (ynfE), found in Escherichia coli (strain K12).